Consider the following 278-residue polypeptide: S-formylglutathione hydrolase YeiG (278 aa).

Residues Ser-145, Asp-223, and His-256 each act as charge relay system in the active site.

It belongs to the esterase D family.

The catalysed reaction is S-formylglutathione + H2O = formate + glutathione + H(+). In terms of biological role, serine hydrolase involved in the detoxification of formaldehyde. Hydrolyzes S-formylglutathione to glutathione and formate. This chain is S-formylglutathione hydrolase YeiG (yeiG), found in Escherichia coli O6:K15:H31 (strain 536 / UPEC).